The chain runs to 130 residues: Cytochrome c-type biogenesis protein CcmE (130 aa).

At 1-7 the chain is on the cytoplasmic side; the sequence is MKKKHKR. Residues 8–28 form a helical; Signal-anchor for type II membrane protein membrane-spanning segment; that stretch reads LLITSGIFCFLSCAVFFILTT. Over 29 to 130 the chain is Extracellular; the sequence is LKENISFFYT…DENYKPKVLK (102 aa). 2 residues coordinate heme: His-120 and Tyr-124.

It belongs to the CcmE/CycJ family.

Its subcellular location is the cell membrane. In terms of biological role, heme chaperone required for the biogenesis of c-type cytochromes. Transiently binds heme delivered by CcmC and transfers the heme to apo-cytochromes in a process facilitated by CcmF and CcmH. The sequence is that of Cytochrome c-type biogenesis protein CcmE from Wolbachia pipientis subsp. Culex pipiens (strain wPip).